Reading from the N-terminus, the 365-residue chain is Bifunctional chorismate mutase/prephenate dehydratase (365 aa).

Residues 1–96 (MSEADQLKAL…SCLALEQPLR (96 aa)) enclose the Chorismate mutase domain. 4 residues coordinate substrate: Arg11, Arg28, Lys39, and Glu57. Residues 97–272 (VAYLGPEGTF…NSTRFLIIGS (176 aa)) enclose the Prephenate dehydratase domain. The 78-residue stretch at 284 to 361 (SIIVSMRNKP…VALKVLGSYP (78 aa)) folds into the ACT domain.

The protein resides in the cytoplasm. The catalysed reaction is chorismate = prephenate. The enzyme catalyses prephenate + H(+) = 3-phenylpyruvate + CO2 + H2O. The protein operates within amino-acid biosynthesis; L-phenylalanine biosynthesis; phenylpyruvate from prephenate: step 1/1. It functions in the pathway metabolic intermediate biosynthesis; prephenate biosynthesis; prephenate from chorismate: step 1/1. Functionally, catalyzes the Claisen rearrangement of chorismate to prephenate and the decarboxylation/dehydration of prephenate to phenylpyruvate. The sequence is that of Bifunctional chorismate mutase/prephenate dehydratase from Stutzerimonas stutzeri (Pseudomonas stutzeri).